The chain runs to 291 residues: Lipoyl synthase (291 aa).

C33, C38, C44, C59, C63, C66, and S274 together coordinate [4Fe-4S] cluster. One can recognise a Radical SAM core domain in the interval 45-263 (WGEGTATFLI…REAAEAMGFK (219 aa)).

The protein belongs to the radical SAM superfamily. Lipoyl synthase family. [4Fe-4S] cluster serves as cofactor.

It is found in the cytoplasm. The catalysed reaction is [[Fe-S] cluster scaffold protein carrying a second [4Fe-4S](2+) cluster] + N(6)-octanoyl-L-lysyl-[protein] + 2 oxidized [2Fe-2S]-[ferredoxin] + 2 S-adenosyl-L-methionine + 4 H(+) = [[Fe-S] cluster scaffold protein] + N(6)-[(R)-dihydrolipoyl]-L-lysyl-[protein] + 4 Fe(3+) + 2 hydrogen sulfide + 2 5'-deoxyadenosine + 2 L-methionine + 2 reduced [2Fe-2S]-[ferredoxin]. It participates in protein modification; protein lipoylation via endogenous pathway; protein N(6)-(lipoyl)lysine from octanoyl-[acyl-carrier-protein]: step 2/2. Catalyzes the radical-mediated insertion of two sulfur atoms into the C-6 and C-8 positions of the octanoyl moiety bound to the lipoyl domains of lipoate-dependent enzymes, thereby converting the octanoylated domains into lipoylated derivatives. This Pyrobaculum calidifontis (strain DSM 21063 / JCM 11548 / VA1) protein is Lipoyl synthase.